A 251-amino-acid polypeptide reads, in one-letter code: Hydroxyacylglutathione hydrolase (251 aa).

Positions 53, 55, 57, 58, 110, 127, and 165 each coordinate Zn(2+).

It belongs to the metallo-beta-lactamase superfamily. Glyoxalase II family. As to quaternary structure, monomer. The cofactor is Zn(2+).

The catalysed reaction is an S-(2-hydroxyacyl)glutathione + H2O = a 2-hydroxy carboxylate + glutathione + H(+). Its pathway is secondary metabolite metabolism; methylglyoxal degradation; (R)-lactate from methylglyoxal: step 2/2. Functionally, thiolesterase that catalyzes the hydrolysis of S-D-lactoyl-glutathione to form glutathione and D-lactic acid. The chain is Hydroxyacylglutathione hydrolase from Yersinia pseudotuberculosis serotype IB (strain PB1/+).